The following is a 101-amino-acid chain: Urease subunit beta (101 aa).

Belongs to the urease beta subunit family. Heterotrimer of UreA (gamma), UreB (beta) and UreC (alpha) subunits. Three heterotrimers associate to form the active enzyme.

Its subcellular location is the cytoplasm. The catalysed reaction is urea + 2 H2O + H(+) = hydrogencarbonate + 2 NH4(+). The protein operates within nitrogen metabolism; urea degradation; CO(2) and NH(3) from urea (urease route): step 1/1. The protein is Urease subunit beta of Azoarcus sp. (strain BH72).